A 321-amino-acid chain; its full sequence is Probable cell division protein WhiA (321 aa).

A DNA-binding region (H-T-H motif) is located at residues 276–309 (NLKELGELLEPPVGKSGVNHRLRKLEKIAEQLHQ).

Belongs to the WhiA family.

In terms of biological role, involved in cell division and chromosome segregation. The protein is Probable cell division protein WhiA of Natranaerobius thermophilus (strain ATCC BAA-1301 / DSM 18059 / JW/NM-WN-LF).